Here is a 298-residue protein sequence, read N- to C-terminus: Glutamyl-Q tRNA(Asp) synthetase (298 aa).

Residues 9-13 (RFAPS) and glutamate 45 contribute to the L-glutamate site. The short motif at 12–22 (PSPTGLLHAGS) is the 'HIGH' region element. The Zn(2+) site is built by cysteine 101, cysteine 103, tyrosine 121, and cysteine 125. L-glutamate is bound by residues tyrosine 179 and arginine 197. A 'KMSKS' region motif is present at residues 235-239 (KLSKQ). Lysine 238 is a binding site for ATP.

This sequence belongs to the class-I aminoacyl-tRNA synthetase family. GluQ subfamily. It depends on Zn(2+) as a cofactor.

Catalyzes the tRNA-independent activation of glutamate in presence of ATP and the subsequent transfer of glutamate onto a tRNA(Asp). Glutamate is transferred on the 2-amino-5-(4,5-dihydroxy-2-cyclopenten-1-yl) moiety of the queuosine in the wobble position of the QUC anticodon. This Chromobacterium violaceum (strain ATCC 12472 / DSM 30191 / JCM 1249 / CCUG 213 / NBRC 12614 / NCIMB 9131 / NCTC 9757 / MK) protein is Glutamyl-Q tRNA(Asp) synthetase.